Here is a 160-residue protein sequence, read N- to C-terminus: Glyoxalase domain-containing protein 5 (160 aa).

A VOC domain is found at 37–157 (RLDHIVMTVK…DRNLIEVSNY (121 aa)).

This sequence belongs to the glyoxalase I family.

This is Glyoxalase domain-containing protein 5 (GLOD5) from Homo sapiens (Human).